A 921-amino-acid chain; its full sequence is Retinoblastoma-associated protein (921 aa).

Disordered stretches follow at residues 1–31 (MPPKPLRRAGAARSQRTSPEGGAGTASPPGG) and 603–634 (RSPKKKASGHPQSGTSNPDAQPSATSQTQKPQ). The segment covering 612-634 (HPQSGTSNPDAQPSATSQTQKPQ) has biased composition (polar residues). The Bipartite nuclear localization signal motif lies at 853–869 (KRSAEPSDAPKPLKRLR). The interval 873-921 (EGQDEADGGKHLPQESKFQQKLAEMTSTRTRMQKQKLNDGNDTSANEEK) is disordered. Positions 910–921 (NDGNDTSANEEK) are enriched in polar residues.

This sequence belongs to the retinoblastoma protein (RB) family. Interacts with and sequesters the E2F1 transcription factor, thereby inhibiting E2F1 transcription. Interacts with SUV39H1, KMT5B and KMT5C. As to quaternary structure, (Microbial infection) Interacts with, and is inhibited by fowl adenovirus 1 protein GAM-1. In terms of processing, phosphorylated in G1, thereby releasing E2F1 which is then able to activate cell growth. Dephosphorylated at the late M phase. Phosphorylation of domain C promotes interaction between the C-terminal domain C and the Pocket domain, and thereby inhibits interactions with heterodimeric E2F/DP transcription factor complexes.

The protein localises to the nucleus. Its subcellular location is the cytoplasm. Functionally, tumor suppressor that is a key regulator of the G1/S transition of the cell cycle. The hypophosphorylated form binds transcription regulators of the E2F family, preventing transcription of E2F-responsive genes. Both physically blocks E2Fs transactivating domain and recruits chromatin-modifying enzymes that actively repress transcription. Cyclin and CDK-dependent phosphorylation of RB1 induces its dissociation from E2Fs, thereby activating transcription of E2F responsive genes and triggering entry into S phase. RB1 also promotes the G0-G1 transition upon phosphorylation and activation by CDK3/cyclin-C. This Gallus gallus (Chicken) protein is Retinoblastoma-associated protein (RB1).